Consider the following 523-residue polypeptide: Sensory neuron membrane protein 1 (523 aa).

Topologically, residues 1–11 (MQLPRELKYAA) are cytoplasmic. A helical transmembrane segment spans residues 12-32 (IAGGVALFGLIFGWVLFPTIL). Over 33 to 458 (KSQLKKEMAL…HQLFIPKRVV (426 aa)) the chain is Extracellular. Asn67 and Asn229 each carry an N-linked (GlcNAc...) asparagine glycan. 3 disulfide bridges follow: Cys268-Cys333, Cys297-Cys352, and Cys335-Cys341. Asn440 carries N-linked (GlcNAc...) asparagine glycosylation. A helical transmembrane segment spans residues 459-479 (GVLRWWMVSFGSLGAVIGIVF). Residues 480–523 (HFRDHIMRLAVSGDTKVSKVTPEEEEQKDISVIGQAQEPAKVNI) are Cytoplasmic-facing.

This sequence belongs to the CD36 family.

It localises to the cell membrane. Plays an olfactory role that is not restricted to pheromone sensitivity. The protein is Sensory neuron membrane protein 1 of Helicoverpa armigera (Cotton bollworm).